A 133-amino-acid chain; its full sequence is uncharacterized protein (133 aa).

Belongs to the ycf68 family.

It is found in the plastid. The protein localises to the chloroplast. This is an uncharacterized protein from Oryza sativa subsp. japonica (Rice).